A 671-amino-acid polypeptide reads, in one-letter code: tRNA(Met) cytidine acetyltransferase TmcA (671 aa).

ATP contacts are provided by residues glutamine 180, 202–211 (GRGKSALAGQ), and arginine 319. One can recognise an N-acetyltransferase domain in the interval 349–531 (IRFSAFTQAL…SGCYTAMALL (183 aa)). Residues 461–463 (IAV), 468–474 (QREGIGQ), glutamate 499, and arginine 506 contribute to the acetyl-CoA site.

This sequence belongs to the RNA cytidine acetyltransferase family. TmcA subfamily.

It is found in the cytoplasm. It carries out the reaction cytidine(34) in elongator tRNA(Met) + acetyl-CoA + ATP + H2O = N(4)-acetylcytidine(34) in elongator tRNA(Met) + ADP + phosphate + CoA + H(+). In terms of biological role, catalyzes the formation of N(4)-acetylcytidine (ac(4)C) at the wobble position of tRNA(Met), by using acetyl-CoA as an acetyl donor and ATP (or GTP). In Citrobacter koseri (strain ATCC BAA-895 / CDC 4225-83 / SGSC4696), this protein is tRNA(Met) cytidine acetyltransferase TmcA.